Consider the following 286-residue polypeptide: MIEVTLLGTGSPIPDARRAGPSTLVRAGGQTFLVDCGRGVLQRAAAVGVGANQISALLLTHLHSDHIADLGDVLITRWVSNFAPDLPPLPIIGPPGTAEVVENMLKAFSFDIGYRIAHHDDLTTPPPVEVEEVTDGVVWGRDEVSIRVGPTDHRPVTPTIGFRIEHHGASVVLAGDTVPCRGLDKLAAGAGALVHTVIRRDLIEALPMQRIRDICDYHSSVEQAAETATRAGVGILILTHYVPTLQPGQEDDWRALAATRFDRQIEIGDDLHRVQVHPGVCAKPAG.

Zn(2+) contacts are provided by His61, His63, Asp65, His66, His153, Asp176, and His240. Asp65 (proton acceptor) is an active-site residue.

It belongs to the RNase Z family. Homodimer. Zn(2+) serves as cofactor.

The catalysed reaction is Endonucleolytic cleavage of RNA, removing extra 3' nucleotides from tRNA precursor, generating 3' termini of tRNAs. A 3'-hydroxy group is left at the tRNA terminus and a 5'-phosphoryl group is left at the trailer molecule.. Functionally, zinc phosphodiesterase, which displays some tRNA 3'-processing endonuclease activity. Probably involved in tRNA maturation, by removing a 3'-trailer from precursor tRNA. The polypeptide is Ribonuclease Z (Mycolicibacterium gilvum (strain PYR-GCK) (Mycobacterium gilvum (strain PYR-GCK))).